Consider the following 140-residue polypeptide: Small ribosomal subunit protein uS12 (140 aa).

Residue D102 is modified to 3-methylthioaspartic acid.

This sequence belongs to the universal ribosomal protein uS12 family. Part of the 30S ribosomal subunit. Contacts proteins S8 and S17. May interact with IF1 in the 30S initiation complex.

With S4 and S5 plays an important role in translational accuracy. In terms of biological role, interacts with and stabilizes bases of the 16S rRNA that are involved in tRNA selection in the A site and with the mRNA backbone. Located at the interface of the 30S and 50S subunits, it traverses the body of the 30S subunit contacting proteins on the other side and probably holding the rRNA structure together. The combined cluster of proteins S8, S12 and S17 appears to hold together the shoulder and platform of the 30S subunit. The protein is Small ribosomal subunit protein uS12 of Bacillus cereus (strain G9842).